The primary structure comprises 340 residues: rRNA adenine N-6-methyltransferase (340 aa).

Residues 1 to 25 (MAGPQDRPRGRGPSSGRPQRPVGGR) are compositionally biased toward low complexity. The disordered stretch occupies residues 1–37 (MAGPQDRPRGRGPSSGRPQRPVGGRSQRDRDRRVLGQ). S-adenosyl-L-methionine is bound by residues N38, L40, G65, E86, D111, and A127. The tract at residues 284–340 (RGGAARGPGDQRGRRGRPGGGPRPDGRAGGGPRRDAGGRRTGDGRGGRPRPPRGGQA) is disordered. Residues 301-314 (PGGGPRPDGRAGGG) are compositionally biased toward gly residues. Residues 315–329 (PRRDAGGRRTGDGRG) are compositionally biased toward basic and acidic residues.

Belongs to the class I-like SAM-binding methyltransferase superfamily. rRNA adenine N(6)-methyltransferase family.

Involved in erythromycin resistance. This Aeromicrobium erythreum (strain ATCC 51598 / DSM 8599 / JCM 8359 / NBRC 15406 / NRRL B-3381) protein is rRNA adenine N-6-methyltransferase (ermA).